We begin with the raw amino-acid sequence, 446 residues long: Phosphoglucosamine mutase (446 aa).

Residue serine 100 is the Phosphoserine intermediate of the active site. The Mg(2+) site is built by serine 100, aspartate 241, aspartate 243, and aspartate 245. Serine 100 carries the post-translational modification Phosphoserine.

The protein belongs to the phosphohexose mutase family. It depends on Mg(2+) as a cofactor. In terms of processing, activated by phosphorylation.

It carries out the reaction alpha-D-glucosamine 1-phosphate = D-glucosamine 6-phosphate. In terms of biological role, catalyzes the conversion of glucosamine-6-phosphate to glucosamine-1-phosphate. This Methylorubrum populi (strain ATCC BAA-705 / NCIMB 13946 / BJ001) (Methylobacterium populi) protein is Phosphoglucosamine mutase.